We begin with the raw amino-acid sequence, 347 residues long: Heat-inducible transcription repressor HrcA (347 aa).

It belongs to the HrcA family.

Functionally, negative regulator of class I heat shock genes (grpE-dnaK-dnaJ and groELS operons). Prevents heat-shock induction of these operons. The protein is Heat-inducible transcription repressor HrcA of Mycoplasmopsis pulmonis (strain UAB CTIP) (Mycoplasma pulmonis).